A 368-amino-acid chain; its full sequence is Metacaspase-6 (368 aa).

Residues histidine 86 and cysteine 139 contribute to the active site. Cysteine 139 is modified (S-nitrosocysteine). The tract at residues 153–174 is disordered; sequence GESTKKKKDSGDSSTINKETEA.

Belongs to the peptidase C14B family. Proteolytically processed; by an autocatalytic mechanism. In terms of tissue distribution, expressed in roots and flower buds.

The polypeptide is Metacaspase-6 (AMC6) (Arabidopsis thaliana (Mouse-ear cress)).